Consider the following 468-residue polypeptide: Transmembrane protein 151A (468 aa).

A disordered region spans residues 1 to 20 (MPEGEGGDCGEVPALVPDGE). 2 helical membrane passes run 45 to 65 (CLLL…CRLA) and 98 to 118 (YLYI…AECW). The tract at residues 384-438 (VSSNSLPPARPSGPRLPFSRSRLSLGAGGRTTPGVFRSLSGGPLGRRGEDTEPLE) is disordered.

Belongs to the TMEM151 family. In terms of tissue distribution, highly expressed in the central nervous system (CNS) including the cerebral cortex, hippocampus, spinal cord, brainstem, and thalamus. Expression is relatively low during postnatal stages but highly expressed at postnatal day 14 (P14), and declined in adulthood. Also expressed in the stomach, heart, liver, spleen, lung, kidney, and muscle.

The protein localises to the endoplasmic reticulum membrane. The protein resides in the cell projection. Its subcellular location is the axon. It localises to the dendrite. The protein is Transmembrane protein 151A (Tmem151a) of Mus musculus (Mouse).